Here is a 547-residue protein sequence, read N- to C-terminus: Chaperonin GroEL 3 (547 aa).

ATP contacts are provided by residues 30–33, Lys51, 87–91, Gly415, and Asp496; these read TLGP and DGTTT.

It belongs to the chaperonin (HSP60) family. Forms a cylinder of 14 subunits composed of two heptameric rings stacked back-to-back. Interacts with the co-chaperonin GroES.

It localises to the cytoplasm. The enzyme catalyses ATP + H2O + a folded polypeptide = ADP + phosphate + an unfolded polypeptide.. Functionally, together with its co-chaperonin GroES, plays an essential role in assisting protein folding. The GroEL-GroES system forms a nano-cage that allows encapsulation of the non-native substrate proteins and provides a physical environment optimized to promote and accelerate protein folding. The chain is Chaperonin GroEL 3 from Bradyrhizobium sp. (strain ORS 278).